The primary structure comprises 355 residues: Peptide chain release factor 1 (355 aa).

Position 233 is an N5-methylglutamine (Gln233). The segment covering 280-293 (ERRKKEQERADSRR) has biased composition (basic and acidic residues). Residues 280–308 (ERRKKEQERADSRRGQVGSGDRSERIRTY) form a disordered region.

This sequence belongs to the prokaryotic/mitochondrial release factor family. Methylated by PrmC. Methylation increases the termination efficiency of RF1.

The protein resides in the cytoplasm. In terms of biological role, peptide chain release factor 1 directs the termination of translation in response to the peptide chain termination codons UAG and UAA. In Rickettsia felis (strain ATCC VR-1525 / URRWXCal2) (Rickettsia azadi), this protein is Peptide chain release factor 1.